The chain runs to 466 residues: Histidine--tRNA ligase (466 aa).

This sequence belongs to the class-II aminoacyl-tRNA synthetase family. Homodimer.

It localises to the cytoplasm. It catalyses the reaction tRNA(His) + L-histidine + ATP = L-histidyl-tRNA(His) + AMP + diphosphate + H(+). This is Histidine--tRNA ligase from Bifidobacterium longum subsp. infantis (strain ATCC 15697 / DSM 20088 / JCM 1222 / NCTC 11817 / S12).